The chain runs to 70 residues: Large ribosomal subunit protein bL31 (70 aa).

Zn(2+) contacts are provided by cysteine 17, cysteine 19, cysteine 37, and cysteine 40.

The protein belongs to the bacterial ribosomal protein bL31 family. Type A subfamily. Part of the 50S ribosomal subunit. The cofactor is Zn(2+).

Binds the 23S rRNA. The chain is Large ribosomal subunit protein bL31 from Clostridium acetobutylicum (strain ATCC 824 / DSM 792 / JCM 1419 / IAM 19013 / LMG 5710 / NBRC 13948 / NRRL B-527 / VKM B-1787 / 2291 / W).